Here is a 656-residue protein sequence, read N- to C-terminus: Translation factor GUF1 homolog, mitochondrial (656 aa).

The N-terminal 29 residues, 1–29, are a transit peptide targeting the mitochondrion; it reads MLAVRRRGLRVLAVAPLRVRGLATTSTEF. Residues 54–238 form the tr-type G domain; that stretch reads ERIRNFSIVA…AVVERLPPPV (185 aa). Residues 63–70, 131–135, and 185–188 each bind GTP; these read AHIDHGKS, DTPGH, and TKID.

It belongs to the TRAFAC class translation factor GTPase superfamily. Classic translation factor GTPase family. LepA subfamily.

Its subcellular location is the mitochondrion inner membrane. It carries out the reaction GTP + H2O = GDP + phosphate + H(+). Promotes mitochondrial protein synthesis. May act as a fidelity factor of the translation reaction, by catalyzing a one-codon backward translocation of tRNAs on improperly translocated ribosomes. Binds to mitochondrial ribosomes in a GTP-dependent manner. In Phytophthora infestans (strain T30-4) (Potato late blight agent), this protein is Translation factor GUF1 homolog, mitochondrial.